Here is a 612-residue protein sequence, read N- to C-terminus: Dihydroxy-acid dehydratase (612 aa).

Residue Asp-81 participates in Mg(2+) binding. Cys-122 contributes to the [2Fe-2S] cluster binding site. Mg(2+) contacts are provided by Asp-123 and Lys-124. The residue at position 124 (Lys-124) is an N6-carboxylysine. Cys-193 contributes to the [2Fe-2S] cluster binding site. Position 489 (Glu-489) interacts with Mg(2+). The active-site Proton acceptor is Ser-515.

It belongs to the IlvD/Edd family. Homodimer. The cofactor is [2Fe-2S] cluster. Mg(2+) is required as a cofactor.

The catalysed reaction is (2R)-2,3-dihydroxy-3-methylbutanoate = 3-methyl-2-oxobutanoate + H2O. The enzyme catalyses (2R,3R)-2,3-dihydroxy-3-methylpentanoate = (S)-3-methyl-2-oxopentanoate + H2O. The protein operates within amino-acid biosynthesis; L-isoleucine biosynthesis; L-isoleucine from 2-oxobutanoate: step 3/4. It functions in the pathway amino-acid biosynthesis; L-valine biosynthesis; L-valine from pyruvate: step 3/4. Functions in the biosynthesis of branched-chain amino acids. Catalyzes the dehydration of (2R,3R)-2,3-dihydroxy-3-methylpentanoate (2,3-dihydroxy-3-methylvalerate) into 2-oxo-3-methylpentanoate (2-oxo-3-methylvalerate) and of (2R)-2,3-dihydroxy-3-methylbutanoate (2,3-dihydroxyisovalerate) into 2-oxo-3-methylbutanoate (2-oxoisovalerate), the penultimate precursor to L-isoleucine and L-valine, respectively. This chain is Dihydroxy-acid dehydratase, found in Xanthomonas axonopodis pv. citri (strain 306).